The sequence spans 506 residues: Histidine ammonia-lyase (506 aa).

Positions 144–146 (ASG) form a cross-link, 5-imidazolinone (Ala-Gly). Serine 145 is subject to 2,3-didehydroalanine (Ser).

The protein belongs to the PAL/histidase family. Post-translationally, contains an active site 4-methylidene-imidazol-5-one (MIO), which is formed autocatalytically by cyclization and dehydration of residues Ala-Ser-Gly.

It localises to the cytoplasm. The enzyme catalyses L-histidine = trans-urocanate + NH4(+). The protein operates within amino-acid degradation; L-histidine degradation into L-glutamate; N-formimidoyl-L-glutamate from L-histidine: step 1/3. The chain is Histidine ammonia-lyase from Legionella pneumophila (strain Lens).